The chain runs to 360 residues: Peptide chain release factor 1 (360 aa).

Position 236 is an N5-methylglutamine (Gln-236).

It belongs to the prokaryotic/mitochondrial release factor family. Methylated by PrmC. Methylation increases the termination efficiency of RF1.

Its subcellular location is the cytoplasm. In terms of biological role, peptide chain release factor 1 directs the termination of translation in response to the peptide chain termination codons UAG and UAA. In Limosilactobacillus fermentum (strain NBRC 3956 / LMG 18251) (Lactobacillus fermentum), this protein is Peptide chain release factor 1.